The chain runs to 97 residues: HssA/B-like protein 44 (97 aa).

2 disordered regions span residues 1–22 and 62–97; these read MTLF…SSIA and ASTS…CGCN. Residues 72-84 show a composition bias toward basic residues; the sequence is RPGRGHGGPHGHG. Gly residues predominate over residues 85–97; it reads RGGSGSGSSCGCN.

Belongs to the hssA/B family.

The protein is HssA/B-like protein 44 (hssl44) of Dictyostelium discoideum (Social amoeba).